A 186-amino-acid chain; its full sequence is Ribosome-recycling factor (186 aa).

The disordered stretch occupies residues 135 to 156 (DANDEVKKLQKDKAVSEDEGKK).

The protein belongs to the RRF family.

It is found in the cytoplasm. Functionally, responsible for the release of ribosomes from messenger RNA at the termination of protein biosynthesis. May increase the efficiency of translation by recycling ribosomes from one round of translation to another. In Bdellovibrio bacteriovorus (strain ATCC 15356 / DSM 50701 / NCIMB 9529 / HD100), this protein is Ribosome-recycling factor.